Reading from the N-terminus, the 55-residue chain is ATP synthase protein 8 (55 aa).

The chain crosses the membrane as a helical span at residues 4–24 (LNPNPWFTILIFTWAVFLTIL).

The protein belongs to the ATPase protein 8 family. In terms of assembly, F-type ATPases have 2 components, CF(1) - the catalytic core - and CF(0) - the membrane proton channel.

The protein localises to the mitochondrion membrane. Mitochondrial membrane ATP synthase (F(1)F(0) ATP synthase or Complex V) produces ATP from ADP in the presence of a proton gradient across the membrane which is generated by electron transport complexes of the respiratory chain. F-type ATPases consist of two structural domains, F(1) - containing the extramembraneous catalytic core and F(0) - containing the membrane proton channel, linked together by a central stalk and a peripheral stalk. During catalysis, ATP synthesis in the catalytic domain of F(1) is coupled via a rotary mechanism of the central stalk subunits to proton translocation. Part of the complex F(0) domain. Minor subunit located with subunit a in the membrane. The sequence is that of ATP synthase protein 8 (mt-atp8) from Polypterus ornatipinnis (Ornate bichir).